The chain runs to 426 residues: Glutamate-1-semialdehyde 2,1-aminomutase (426 aa).

At Lys-265 the chain carries N6-(pyridoxal phosphate)lysine.

Belongs to the class-III pyridoxal-phosphate-dependent aminotransferase family. HemL subfamily. As to quaternary structure, homodimer. It depends on pyridoxal 5'-phosphate as a cofactor.

It localises to the cytoplasm. The enzyme catalyses (S)-4-amino-5-oxopentanoate = 5-aminolevulinate. Its pathway is porphyrin-containing compound metabolism; protoporphyrin-IX biosynthesis; 5-aminolevulinate from L-glutamyl-tRNA(Glu): step 2/2. The sequence is that of Glutamate-1-semialdehyde 2,1-aminomutase from Klebsiella pneumoniae (strain 342).